Reading from the N-terminus, the 218-residue chain is Adenylate kinase (218 aa).

ATP is bound at residue 12–17; the sequence is GAGKGT. Residues 32–61 are NMP; the sequence is STGDMLREARSSGTEMGKRVAEVMDRGELV. AMP-binding positions include Thr-33, Arg-38, 59-61, 85-88, and Gln-92; these read ELV and GFPR. An LID region spans residues 126-164; sequence GRFTCGNCGEVYHDVTKPTKEPGKCDVCGSTDLRRRADD. Position 127 (Arg-127) interacts with ATP. Zn(2+) is bound by residues Cys-130 and Cys-133. 136 to 137 is a binding site for ATP; that stretch reads VY. Residues Cys-150 and Cys-153 each coordinate Zn(2+). AMP is bound by residues Arg-161 and Arg-172. Ala-200 is an ATP binding site.

This sequence belongs to the adenylate kinase family. In terms of assembly, monomer.

Its subcellular location is the cytoplasm. The catalysed reaction is AMP + ATP = 2 ADP. Its pathway is purine metabolism; AMP biosynthesis via salvage pathway; AMP from ADP: step 1/1. In terms of biological role, catalyzes the reversible transfer of the terminal phosphate group between ATP and AMP. Plays an important role in cellular energy homeostasis and in adenine nucleotide metabolism. The polypeptide is Adenylate kinase (Paracoccus denitrificans (strain Pd 1222)).